The sequence spans 312 residues: Malate dehydrogenase (312 aa).

Residues 12 to 17 (GAGFTG) and Asp36 each bind NAD(+). Arg87 and Arg93 together coordinate substrate. Residues Asn100 and 123–125 (LTN) contribute to the NAD(+) site. Residue Asn125 coordinates substrate. Ser149 is subject to Phosphoserine. Arg156 is a binding site for substrate. The active-site Proton acceptor is His180.

The protein belongs to the LDH/MDH superfamily. MDH type 3 family.

It carries out the reaction (S)-malate + NAD(+) = oxaloacetate + NADH + H(+). Functionally, catalyzes the reversible oxidation of malate to oxaloacetate. The sequence is that of Malate dehydrogenase from Geobacillus thermodenitrificans (strain NG80-2).